The following is a 113-amino-acid chain: Protein NATD1 (113 aa).

The span at 1-16 (MAQSPAAASPGAPEQG) shows a compositional bias: low complexity. Positions 1–20 (MAQSPAAASPGAPEQGCPIR) are disordered. The N-acetyltransferase domain occupies 22 to 112 (EHDRRRRQFT…PLPQYLERLQ (91 aa)).

This sequence belongs to the NATD1 family.

This Bos taurus (Bovine) protein is Protein NATD1 (NATD1).